The chain runs to 137 residues: Ribosome-binding factor A (137 aa).

The segment at 110-137 (RIQQEKEGATDDRDQNDSGEDATPHSND) is disordered. Over residues 112–125 (QQEKEGATDDRDQN) the composition is skewed to basic and acidic residues.

Belongs to the RbfA family. Monomer. Binds 30S ribosomal subunits, but not 50S ribosomal subunits or 70S ribosomes.

It localises to the cytoplasm. One of several proteins that assist in the late maturation steps of the functional core of the 30S ribosomal subunit. Associates with free 30S ribosomal subunits (but not with 30S subunits that are part of 70S ribosomes or polysomes). Required for efficient processing of 16S rRNA. May interact with the 5'-terminal helix region of 16S rRNA. The sequence is that of Ribosome-binding factor A from Rhodopirellula baltica (strain DSM 10527 / NCIMB 13988 / SH1).